Reading from the N-terminus, the 93-residue chain is Small ribosomal subunit protein uS19 (93 aa).

2 disordered regions span residues 1–25 (MPRS…QNTK) and 74–93 (FAPT…ARRR). Composition is skewed to basic and acidic residues over residues 14–23 (HLQKKVDDQN) and 81–93 (RGHD…ARRR).

The protein belongs to the universal ribosomal protein uS19 family.

In terms of biological role, protein S19 forms a complex with S13 that binds strongly to the 16S ribosomal RNA. The sequence is that of Small ribosomal subunit protein uS19 from Beutenbergia cavernae (strain ATCC BAA-8 / DSM 12333 / CCUG 43141 / JCM 11478 / NBRC 16432 / NCIMB 13614 / HKI 0122).